The primary structure comprises 572 residues: MAKFNKKKLPSRHTSLGADRAPHRSFYYAMGETEKDVAKPFVGVVSTWNEAAPCNIALMRQAQSVKKGVRASGGTPREFCTITVTDGIAMGHEGMKSSLISREVIADSTELTVRGHCYDALVGIAGCDKSLPALMMAMVRLNVPSVFIYGGSILPGQYKGKDVTVVDVFEAVGKHSAGKMSAKELRKLELVACPSAGACGGQFTANTMACVSEAIGLALPYSAGTPAPYEERDKYALLSGKTVMNLLQKNIRPRDIVTKKSLENAATIVAATGGSTNAALHLPAIANEIGIKFDLMDVAKIFKKTPYLADLKPGGKYVAKDMWLAGGVPMLLKTLFDGGFIHGDCMTVTGKTMKQNLKNIKFNPKQKVLRAYDNPLSPDGGVVGLKGNLAPDGGIVKIAGLKKLQFTGKARCFDNEEAAMACVQKKKYKAGDVIIIRYEGPVGGPGMREMLSTTGAIYGQGMGEKVALITDGRFSGATRGFCVGHVGPEAALGGPLALLRNGDVIDIDAKKGTINVRLTKSQLATRHKKWKAKKSSFGSGTIWKYAQTVGPAYLGAPTHPGKRKEVKVYADI.

Cys54 contributes to the [2Fe-2S] cluster binding site. Asp86 provides a ligand contact to Mg(2+). Cys127 serves as a coordination point for [2Fe-2S] cluster. Mg(2+) contacts are provided by Asp128 and Lys129. Lys129 is modified (N6-carboxylysine). Residue Cys199 coordinates [2Fe-2S] cluster. Glu449 serves as a coordination point for Mg(2+). Ser475 functions as the Proton acceptor in the catalytic mechanism.

This sequence belongs to the IlvD/Edd family. Homodimer. [2Fe-2S] cluster serves as cofactor. Mg(2+) is required as a cofactor.

It catalyses the reaction (2R)-2,3-dihydroxy-3-methylbutanoate = 3-methyl-2-oxobutanoate + H2O. The enzyme catalyses (2R,3R)-2,3-dihydroxy-3-methylpentanoate = (S)-3-methyl-2-oxopentanoate + H2O. It functions in the pathway amino-acid biosynthesis; L-isoleucine biosynthesis; L-isoleucine from 2-oxobutanoate: step 3/4. The protein operates within amino-acid biosynthesis; L-valine biosynthesis; L-valine from pyruvate: step 3/4. In terms of biological role, functions in the biosynthesis of branched-chain amino acids. Catalyzes the dehydration of (2R,3R)-2,3-dihydroxy-3-methylpentanoate (2,3-dihydroxy-3-methylvalerate) into 2-oxo-3-methylpentanoate (2-oxo-3-methylvalerate) and of (2R)-2,3-dihydroxy-3-methylbutanoate (2,3-dihydroxyisovalerate) into 2-oxo-3-methylbutanoate (2-oxoisovalerate), the penultimate precursor to L-isoleucine and L-valine, respectively. In Pelagibacter ubique (strain HTCC1062), this protein is Dihydroxy-acid dehydratase.